Consider the following 95-residue polypeptide: uncharacterized protein (95 aa).

A helical transmembrane segment spans residues 12-32; that stretch reads IASLVVSVVVLLIGLILWFFI.

It localises to the cell membrane. This is an uncharacterized protein from Escherichia coli O157:H7.